The following is a 252-amino-acid chain: 5'-nucleotidase SurE (252 aa).

Residues aspartate 8, aspartate 9, serine 39, and asparagine 95 each contribute to the a divalent metal cation site.

The protein belongs to the SurE nucleotidase family. The cofactor is a divalent metal cation.

The protein resides in the cytoplasm. The catalysed reaction is a ribonucleoside 5'-phosphate + H2O = a ribonucleoside + phosphate. In terms of biological role, nucleotidase that shows phosphatase activity on nucleoside 5'-monophosphates. This is 5'-nucleotidase SurE from Clostridium botulinum (strain Loch Maree / Type A3).